The sequence spans 422 residues: Serpin A11 (422 aa).

An N-terminal signal peptide occupies residues 1–24 (MGPVWLWLLIAELLLPVHYQPSSA). A disordered region spans residues 25-45 (HGDKSLGAPQPASHQSLEPAP). N106, N169, N350, and N385 each carry an N-linked (GlcNAc...) asparagine glycan.

It belongs to the serpin family.

It localises to the secreted. This chain is Serpin A11 (Serpina11), found in Rattus norvegicus (Rat).